The primary structure comprises 642 residues: MKKTKTYQVFCIAALSVLTLQLINGSSAATPPPPNSNSSTSCNRACGGVSIPFPFGIGKDCYLNGWYEVICNTSTSGSSGTTVPFLSRINSEVVNISLPDGKKLYGVVHIKGPVTSLGCSSSSSSSQVSEMSLPNLNVTGRGSPYFLTDENCLVMVGCGTKALMKDIESEILGCESSCEDSKSSEEVTNSKCDGYKCCQARIPLERPQVIGINIENTSATRGKEGCSVAFLTNKRYAPMNVTEPEQFHAGGYAVVELGWYFDTSDSRYRNPLGCRNMTRYSSYSSFDKCSCEYDYFSGMSYRICYCNYGYTGNPYLRHGCIDIDECEGHHNCGEGTCVNMPGTHSCEPKITKPEKASVLQGVLISLGVLLFVLGILGLYKFIKKRTRIIRNKNFFKRNGGLLLKQQLITKNGNVDMSRIFSSKELKKATDNFSMNRVLGQGGQGTVYKGMLAEGRIVAVKRSKVVGEGKMEEFINEVVLLSQINHRNIVKLLGCCLETEVPVLVYEYIPNGDLFKRLHEKSESNDYTMTWEVRLRIAIEIAGALSYMHSAASIPIYHRDIKTTNILLDEKYRAKVSDFGTSRSITIAQTHLTTLVAGTFGYMDPEYFLSSQYTDKSDVYSFGVVLVELITGEKPLSRKRIGN.

A signal peptide spans 1-28; the sequence is MKKTKTYQVFCIAALSVLTLQLINGSSA. Residues 29–357 are Extracellular-facing; the sequence is ATPPPPNSNS…PKITKPEKAS (329 aa). N37, N72, N95, N137, N216, N240, and N276 each carry an N-linked (GlcNAc...) asparagine glycan. The tract at residues 289–346 is atypical EGF-like; sequence CSCEYDYFSGMSYRICYCNYGYTGNPYLRHGCIDIDECEGHHNCGEGTCVNMPGTHSC. 3 disulfide bridges follow: C291-C304, C326-C337, and C332-C346. A helical membrane pass occupies residues 358–378; the sequence is VLQGVLISLGVLLFVLGILGL. The Cytoplasmic segment spans residues 379 to 642; the sequence is YKFIKKRTRI…KPLSRKRIGN (264 aa). Positions 432 to 642 constitute a Protein kinase domain; that stretch reads FSMNRVLGQG…KPLSRKRIGN (211 aa). ATP contacts are provided by residues 438–446 and K460; that span reads LGQGGQGTV. Position 505 is a phosphotyrosine (Y505). D559 (proton acceptor) is an active-site residue. T593 and T598 each carry phosphothreonine. Y606 is subject to Phosphotyrosine.

The protein belongs to the protein kinase superfamily. Ser/Thr protein kinase family. In terms of tissue distribution, slightly expressed in the whole plant.

The protein localises to the membrane. The catalysed reaction is L-seryl-[protein] + ATP = O-phospho-L-seryl-[protein] + ADP + H(+). It catalyses the reaction L-threonyl-[protein] + ATP = O-phospho-L-threonyl-[protein] + ADP + H(+). Its function is as follows. Serine/threonine-protein kinase that may function as a signaling receptor of extracellular matrix component. This chain is Wall-associated receptor kinase-like 6 (WAKL6), found in Arabidopsis thaliana (Mouse-ear cress).